The primary structure comprises 152 residues: UPF0179 protein Mlab_1307 (152 aa).

This sequence belongs to the UPF0179 family.

The sequence is that of UPF0179 protein Mlab_1307 from Methanocorpusculum labreanum (strain ATCC 43576 / DSM 4855 / Z).